Reading from the N-terminus, the 815-residue chain is Probable disease resistance protein At5g66910 (815 aa).

The RPW8 domain occupies 1–150; that stretch reads MVVVDWLGLG…NINKKLDRLS (150 aa). 2 NB-ARC domains span residues 156–283 and 341–440; these read PLVS…DVWQ and SPDE…DIWM. 196–203 is an ATP binding site; it reads GPPGCGKT. LRR repeat units lie at residues 656 to 678, 680 to 702, 704 to 726, and 728 to 750; these read NLQE…IPEV, SLKT…IGNL, RLEV…TERL, and NLRS…IGKL.

The protein belongs to the disease resistance NB-LRR family.

Functionally, probable disease resistance protein. This chain is Probable disease resistance protein At5g66910, found in Arabidopsis thaliana (Mouse-ear cress).